The following is a 623-amino-acid chain: Alpha-1,2-mannosyltransferase Alg9 (623 aa).

The next 8 helical transmembrane spans lie at 152-172, 193-223, 229-254, 266-284, 326-348, 360-378, 390-410, and 431-452; these read LIFY…ERYM, LFSV…AAWW, FAIF…PLVL, FVQW…MIAI, FLNF…IDYL, FPHY…VFFA, IYPL…RIFF, and FIAI…FALY.

It belongs to the glycosyltransferase 22 family.

The protein localises to the endoplasmic reticulum membrane. The catalysed reaction is an alpha-D-Man-(1-&gt;2)-alpha-D-Man-(1-&gt;2)-alpha-D-Man-(1-&gt;3)-[alpha-D-Man-(1-&gt;3)-alpha-D-Man-(1-&gt;6)]-beta-D-Man-(1-&gt;4)-beta-D-GlcNAc-(1-&gt;4)-alpha-D-GlcNAc-diphospho-di-trans,poly-cis-dolichol + a di-trans,poly-cis-dolichyl beta-D-mannosyl phosphate = an alpha-D-Man-(1-&gt;2)-alpha-D-Man-(1-&gt;2)-alpha-D-Man-(1-&gt;3)-[alpha-D-Man-(1-&gt;2)-alpha-D-Man-(1-&gt;3)-alpha-D-Man-(1-&gt;6)]-beta-D-Man-(1-&gt;4)-beta-D-GlcNAc-(1-&gt;4)-alpha-D-GlcNAc-diphospho-di-trans,poly-cis-dolichol + a di-trans,poly-cis-dolichyl phosphate + H(+). The enzyme catalyses an alpha-D-Man-(1-&gt;2)-alpha-D-Man-(1-&gt;2)-alpha-D-Man-(1-&gt;3)-[alpha-D-Man-(1-&gt;2)-alpha-D-Man-(1-&gt;3)-[alpha-D-Man-(1-&gt;6)]-alpha-D-Man-(1-&gt;6)]-beta-D-Man-(1-&gt;4)-beta-D-GlcNAc-(1-&gt;4)-alpha-D-GlcNAc-diphospho-di-trans,poly-cis-dolichol + a di-trans,poly-cis-dolichyl beta-D-mannosyl phosphate = an alpha-D-Man-(1-&gt;2)-alpha-D-Man-(1-&gt;2)-alpha-D-Man-(1-&gt;3)-[alpha-D-Man-(1-&gt;2)-alpha-D-Man-(1-&gt;3)-[alpha-D-Man-(1-&gt;2)-alpha-D-Man-(1-&gt;6)]-alpha-D-Man-(1-&gt;6)]-beta-D-Man-(1-&gt;4)-beta-D-GlcNAc-(1-&gt;4)-alpha-D-GlcNAc-diphospho-di-trans,poly-cis-dolichol + a di-trans,poly-cis-dolichyl phosphate + H(+). It functions in the pathway protein modification; protein glycosylation. Functionally, probable alpha-1,2-mannosyltransferase involved in the N-glycosylation pathway. Probably involved in glycosylation of the TNF receptor grnd, regulating its ligand affinity. Required for normal epithelial growth and architecture. Suppressor of JNK-dependent intestinal stem cell proliferation. This is Alpha-1,2-mannosyltransferase Alg9 from Drosophila melanogaster (Fruit fly).